We begin with the raw amino-acid sequence, 344 residues long: uncharacterized protein (344 aa).

The disordered stretch occupies residues 304 to 344; the sequence is AVPAPTPRRPLDSVLQIRQTPEKGRNASDRNARETGWFSPP. The segment covering 323–336 has biased composition (basic and acidic residues); that stretch reads TPEKGRNASDRNAR.

This is an uncharacterized protein from Mycobacterium tuberculosis (strain CDC 1551 / Oshkosh).